The chain runs to 264 residues: tRNA pseudouridine synthase A (264 aa).

Residue aspartate 51 is the Nucleophile of the active site. Tyrosine 109 contacts substrate.

Belongs to the tRNA pseudouridine synthase TruA family. In terms of assembly, homodimer.

The enzyme catalyses uridine(38/39/40) in tRNA = pseudouridine(38/39/40) in tRNA. Formation of pseudouridine at positions 38, 39 and 40 in the anticodon stem and loop of transfer RNAs. The sequence is that of tRNA pseudouridine synthase A from Vibrio cholerae serotype O1 (strain ATCC 39541 / Classical Ogawa 395 / O395).